A 1001-amino-acid polypeptide reads, in one-letter code: Receptor-type tyrosine-protein phosphatase N2 (1001 aa).

The first 27 residues, 1–27 (MGPPLPLLLLLLLPPPLPRALPAPASA), serve as a signal peptide directing secretion. An involved in localization to secretory granules; interaction with CPE region spans residues 1–407 (MGPPLPLLLL…PEGPLLEKSS (407 aa)). The Extracellular portion of the chain corresponds to 28–600 (RGRQLPGRLG…HQEEQEDSTK (573 aa)). Position 259 is an omega-N-methylarginine (Arg259). Disordered regions lie at residues 271–296 (PFSA…SMDD), 308–359 (QQNS…DAPE), and 394–459 (SPLL…LEDQ). Over residues 312 to 325 (EVDRLGPLKEEKAD) the composition is skewed to basic and acidic residues. The residue at position 339 (Ser339) is a Phosphoserine. Basic and acidic residues predominate over residues 340-355 (QESHGRGAEGQPREQT). Over residues 394–404 (SPLLPEGPLLE) the composition is skewed to low complexity. Positions 405–416 (KSSREEIKKSEQ) are enriched in basic and acidic residues. Residues 417–428 (PEEVLSSEEETA) are compositionally biased toward acidic residues. Phosphoserine occurs at positions 422 and 423. Over residues 429 to 459 (GVEHVRSRTYSKDLFERKPNSEPQPRRLEDQ) the composition is skewed to basic and acidic residues. Residue Asn550 is glycosylated (N-linked (GlcNAc...) asparagine). The helical transmembrane segment at 601 to 621 (FILLTFLSIACILGVLLASSL) threads the bilayer. The Cytoplasmic portion of the chain corresponds to 622-1001 (AYCLRHNSHY…VNAILKALPQ (380 aa)). The Tyrosine-based internalization motif motif lies at 652-661 (YQELCRQRMA). Positions 663–705 (RPQDRSEGPHTSRINSVSSQFSDGPMPSPSARSSTSSWSEEPV) are disordered. Over residues 674–684 (SRINSVSSQFS) the composition is skewed to polar residues. Phosphoserine is present on residues Ser678 and Ser684. The segment covering 691–705 (PSARSSTSSWSEEPV) has biased composition (low complexity). A Phosphothreonine modification is found at Thr697. The Tyrosine-protein phosphatase domain occupies 731–991 (LEKEWEALCA…EFALTAVAEE (261 aa)). Residues Asp899 and 931 to 937 (CSDGAGR) contribute to the substrate site. The active-site Phosphocysteine intermediate is the Cys931. An N6-acetyllysine modification is found at Lys956. Residue Gln976 coordinates substrate. The short motif at 990–996 (EEVNAIL) is the Leucine-based sorting signal element.

Belongs to the protein-tyrosine phosphatase family. As to quaternary structure, self-associates. Interacts (via cytoplasmic domain) with PTPRN (via cytoplasmic domain). Interacts (precursor form) with CPE. Interacts with HAP1 isoform A. Interacts with AP2A1 or AP2A2 and AP1G1; indicative for an association with adaptor protein complex 2 (AP-2) and adaptor protein complex 1 (AP-1). Interacts with AP2M1; indicative for an association with adaptor protein complex 2 (AP-2). Interacts with MYO5A. Post-translationally, subject to proteolytic cleavage at multiple sites during maturation of secretory granules. In the brain at least IA-2beta71, IA-2beta64 and IA-2beta60 have been detected, in the pancreas and a pancreatic beta cell line only IA-2beta60 has been detected. As to expression, detected in brain. Detected in pancreas islets (at protein level). Detected in pancreas and brain.

It localises to the cytoplasmic vesicle. The protein localises to the secretory vesicle membrane. Its subcellular location is the secretory vesicle. The protein resides in the synaptic vesicle membrane. It carries out the reaction O-phospho-L-tyrosyl-[protein] + H2O = L-tyrosyl-[protein] + phosphate. In terms of biological role, plays a role in vesicle-mediated secretory processes. Required for normal accumulation of secretory vesicles in hippocampus, pituitary and pancreatic islets. Required for the accumulation of normal levels of insulin-containing vesicles and preventing their degradation. Plays a role in insulin secretion in response to glucose stimuli. Required for normal accumulation of the neurotransmitters norepinephrine, dopamine and serotonin in the brain. In females, but not in males, required for normal accumulation and secretion of pituitary hormones, such as luteinizing hormone (LH) and follicle-stimulating hormone (FSH). Required to maintain normal levels of renin expression and renin release. May regulate catalytic active protein-tyrosine phosphatases such as PTPRA through dimerization. Has phosphatidylinositol phosphatase activity; the PIPase activity is involved in its ability to regulate insulin secretion. Can dephosphorylate phosphatidylinositol 4,5-biphosphate (PI(4,5)P2), phosphatidylinositol 5-phosphate and phosphatidylinositol 3-phosphate. Regulates PI(4,5)P2 level in the plasma membrane and localization of cofilin at the plasma membrane and thus is indirectly involved in regulation of actin dynamics related to cell migration and metastasis; upon hydrolysis of PI(4,5)P2 cofilin is released from the plasma membrane and acts in the cytoplasm in severing F-actin filaments. The protein is Receptor-type tyrosine-protein phosphatase N2 (Ptprn2) of Mus musculus (Mouse).